Here is a 352-residue protein sequence, read N- to C-terminus: Homeobox protein Mohawk (352 aa).

Positions 19-54 are disordered; that stretch reads GASERERGGRPYSGVLDSPHARPEVGIPDGPPLKDN. The homeobox; TALE-type DNA-binding region spans 71–132; it reads VRHKRQALQD…NARRRLKNTV (62 aa). Disordered regions lie at residues 159-189 and 245-301; these read VSSD…VHHP and TRQR…PSKD.

Belongs to the TALE/IRO homeobox family.

Its subcellular location is the nucleus. Functionally, may act as a morphogenetic regulator of cell adhesion. The chain is Homeobox protein Mohawk (MKX) from Homo sapiens (Human).